The primary structure comprises 261 residues: Type III pantothenate kinase (261 aa).

6-13 (DVGNTNTV) is a binding site for ATP. Position 107–110 (107–110 (GADR)) interacts with substrate. Aspartate 109 functions as the Proton acceptor in the catalytic mechanism. Aspartate 129 is a binding site for K(+). Threonine 132 lines the ATP pocket. Residue threonine 183 coordinates substrate.

The protein belongs to the type III pantothenate kinase family. In terms of assembly, homodimer. NH4(+) is required as a cofactor. The cofactor is K(+).

The protein localises to the cytoplasm. The enzyme catalyses (R)-pantothenate + ATP = (R)-4'-phosphopantothenate + ADP + H(+). Its pathway is cofactor biosynthesis; coenzyme A biosynthesis; CoA from (R)-pantothenate: step 1/5. Its function is as follows. Catalyzes the phosphorylation of pantothenate (Pan), the first step in CoA biosynthesis. This Kosmotoga olearia (strain ATCC BAA-1733 / DSM 21960 / TBF 19.5.1) protein is Type III pantothenate kinase.